The primary structure comprises 388 residues: 4-hydroxy-3-methylbut-2-en-1-yl diphosphate synthase (flavodoxin) (388 aa).

[4Fe-4S] cluster-binding residues include Cys281, Cys284, Cys316, and Glu323.

The protein belongs to the IspG family. [4Fe-4S] cluster is required as a cofactor.

It carries out the reaction (2E)-4-hydroxy-3-methylbut-2-enyl diphosphate + oxidized [flavodoxin] + H2O + 2 H(+) = 2-C-methyl-D-erythritol 2,4-cyclic diphosphate + reduced [flavodoxin]. It functions in the pathway isoprenoid biosynthesis; isopentenyl diphosphate biosynthesis via DXP pathway; isopentenyl diphosphate from 1-deoxy-D-xylulose 5-phosphate: step 5/6. In terms of biological role, converts 2C-methyl-D-erythritol 2,4-cyclodiphosphate (ME-2,4cPP) into 1-hydroxy-2-methyl-2-(E)-butenyl 4-diphosphate. The polypeptide is 4-hydroxy-3-methylbut-2-en-1-yl diphosphate synthase (flavodoxin) (Arthrobacter sp. (strain FB24)).